The following is a 238-amino-acid chain: Probable transcriptional regulatory protein YeeN (238 aa).

This sequence belongs to the TACO1 family. YeeN subfamily.

It localises to the cytoplasm. The polypeptide is Probable transcriptional regulatory protein YeeN (Salmonella choleraesuis (strain SC-B67)).